Reading from the N-terminus, the 201-residue chain is Receptor expression-enhancing protein 6 (201 aa).

A run of 3 helical transmembrane segments spans residues 36 to 56 (LAAGALALLGLYLLFGYGASL), 89 to 109 (WVVYALFGLVEFFSDLLLFWF), and 117 to 137 (CAFLLFCMTPGPWNGALLLYH).

Belongs to the DP1 family. As to quaternary structure, interacts with STX3. Interacts with clathrin. Expressed in the inner segment of rod photoreceptors and outer plexiform layer of the retina (at protein level). Expressed in liver, but not detected in brain, muscle, kidney, retinal cone photoreceptors or retinal ganglion cells (at protein level). Highly expressed in the ganglion cell layer of the retina and in liver, and also detected at low levels in kidney and testis. Isoform 1: Expressed in the retina. Isoform 2: Expressed in liver.

The protein localises to the endoplasmic reticulum membrane. It localises to the cytoplasmic vesicle. It is found in the clathrin-coated vesicle membrane. Required for correct function and survival of retinal photoreceptors. Required for retinal development. In rod photoreceptors, facilitates stability and/or trafficking of guanylate cyclases and is required to maintain endoplasmic reticulum and mitochondrial homeostasis. May play a role in clathrin-coated intracellular vesicle trafficking of proteins from the endoplasmic reticulum to the retinal rod plasma membrane. This Mus musculus (Mouse) protein is Receptor expression-enhancing protein 6 (Reep6).